A 118-amino-acid polypeptide reads, in one-letter code: MICOS complex subunit MIC13 (118 aa).

The Mitochondrial matrix segment spans residues 1-7 (MVARVWS). A helical transmembrane segment spans residues 8–26 (LMRFLIKGSVAGGAVYLVY). Residues 27–118 (DQELLGPSDK…GWEYVKARTK (92 aa)) lie on the Mitochondrial intermembrane side of the membrane.

Belongs to the MICOS complex subunit Mic13 family. In terms of assembly, component of the mitochondrial contact site and cristae organizing system (MICOS) complex, composed of at least MICOS10/MIC10, CHCHD3/MIC19, CHCHD6/MIC25, APOO/MIC26, MICOS13/MIC13, APOOL/MIC27 and IMMT/MIC60. The MICOS complex associates with mitochondrial outer membrane proteins SAMM50, MTX1 and MTX2 (together described as components of the mitochondrial outer membrane sorting assembly machinery (SAM) complex) and DNAJC11, mitochondrial inner membrane protein TMEM11 and with HSPA9. The MICOS and SAM complexes together with DNAJC11 are part of a large protein complex spanning both membranes termed the mitochondrial intermembrane space bridging (MIB) complex.

It is found in the mitochondrion inner membrane. Its function is as follows. Component of the MICOS complex, a large protein complex of the mitochondrial inner membrane that plays crucial roles in the maintenance of crista junctions, inner membrane architecture, and formation of contact sites to the outer membrane. Constituent of mature MICOS complex, it is required for the formation of cristae junction (CJ) and maintenance of cristae morphology. Required for the incorporation of MICOS10/MIC10 into the MICOS complex. The protein is MICOS complex subunit MIC13 of Homo sapiens (Human).